We begin with the raw amino-acid sequence, 229 residues long: Large ribosomal subunit protein uL1 (229 aa).

It belongs to the universal ribosomal protein uL1 family. As to quaternary structure, part of the 50S ribosomal subunit.

Functionally, binds directly to 23S rRNA. The L1 stalk is quite mobile in the ribosome, and is involved in E site tRNA release. Protein L1 is also a translational repressor protein, it controls the translation of the L11 operon by binding to its mRNA. This Latilactobacillus sakei subsp. sakei (strain 23K) (Lactobacillus sakei subsp. sakei) protein is Large ribosomal subunit protein uL1.